Here is a 390-residue protein sequence, read N- to C-terminus: LIM/homeobox protein Lhx4 (390 aa).

2 consecutive LIM zinc-binding domains span residues 28–87 (PQCA…RFGT) and 88–150 (KCTA…AKQN). The segment at residues 157–216 (AKRPRTTITAKQLETLKNAYKNSPKPARHVREQLSSETGLDMRVVQVWFQNRRAKEKRLK) is a DNA-binding region (homeobox). Residues 161 to 181 (RTTITAKQLETLKNAYKNSPK) are interaction with DNA. The interval 199–211 (RVVQVWFQNRRAK) is interaction with 5-mCpG DNA. Disordered stretches follow at residues 230 to 253 (SVKR…GVSD) and 356 to 390 (AGGP…HPPF).

It localises to the nucleus. May play a critical role in the development of respiratory control mechanisms and in the normal growth and maturation of the lung. Binds preferentially to methylated DNA. This is LIM/homeobox protein Lhx4 (LHX4) from Homo sapiens (Human).